The following is a 1128-amino-acid chain: Apoptosis-stimulating of p53 protein 2 (1128 aa).

Positions 85 to 120 (PPNRDIVSGPRSQDPSVKRNGVKVPGEHRRKENGVN) are disordered. Residues 332 to 348 (NLPQQAVSAPSRVAAVG) form an interaction with APPBP1 region. The disordered stretch occupies residues 393 to 436 (MRSGAASQSKGSKAHPASPDWNPSNADLLPSQGSSVPQSAGTAL). The span at 413-433 (WNPSNADLLPSQGSSVPQSAG) shows a compositional bias: polar residues. Phosphoserine is present on residues Ser479, Ser555, Ser568, Ser571, and Ser575. 2 disordered regions span residues 549–596 (QARM…FPPA) and 654–705 (NPQQ…LPFL). The segment covering 562 to 574 (GQDQVLSPASKQE) has biased composition (polar residues). Positions 654 to 669 (NPQQHPENIYSCSQGK) are enriched in polar residues. Over residues 684–693 (HESHENERIP) the composition is skewed to basic and acidic residues. Ser697, Ser713, and Ser736 each carry phosphoserine. 3 disordered regions span residues 723–748 (KLSN…GPNI), 802–824 (SLVP…SDVP), and 870–907 (PPPP…KRTN). An SH3-binding motif is present at residues 866-875 (YPPYPPPPYP). The segment at 876–1128 (SGEPEVSEED…RIKPRQRSLA (253 aa)) is mediates interaction with APC2. ANK repeat units follow at residues 958–987 (EGIT…NVNA) and 991–1020 (DGWT…AVFA). The 63-residue stretch at 1057–1119 (MNKGVIYALW…PRNLLGLYPR (63 aa)) folds into the SH3 domain.

It belongs to the ASPP family. Interacts with P53/TP53; the interaction promotes pro-apoptotic activity. Interacts with BCL2. Interacts with protein phosphatase 1. Interacts with RELA NF-kappa-B subunit. This interaction probably prevents the activation of apoptosis, possibly by preventing its interaction with p53/TP53. Interacts with APC2 and APPBP1. Interacts with DDX42 (via the C-terminus); the interaction is not inhibited by TP53BP2 ubiquitination and is independent of p53/TP53.

The protein resides in the cytoplasm. It is found in the perinuclear region. The protein localises to the nucleus. Its function is as follows. Regulator that plays a central role in regulation of apoptosis and cell growth via its interactions with proteins such as TP53. Regulates p53/TP53 by enhancing the DNA binding and transactivation function of p53/TP53 on the promoters of proapoptotic genes in vivo. Inhibits the ability of APPBP1 to conjugate NEDD8 to CUL1, and thereby decreases APPBP1 ability to induce apoptosis. Impedes cell cycle progression at G2/M. Its apoptosis-stimulating activity is inhibited by its interaction with DDX42. The polypeptide is Apoptosis-stimulating of p53 protein 2 (Tp53bp2) (Mus musculus (Mouse)).